We begin with the raw amino-acid sequence, 116 residues long: Large ribosomal subunit protein bL19 (116 aa).

The protein belongs to the bacterial ribosomal protein bL19 family.

Its function is as follows. This protein is located at the 30S-50S ribosomal subunit interface and may play a role in the structure and function of the aminoacyl-tRNA binding site. In Geobacillus stearothermophilus (Bacillus stearothermophilus), this protein is Large ribosomal subunit protein bL19 (rplS).